The primary structure comprises 545 residues: 2-succinyl-5-enolpyruvyl-6-hydroxy-3-cyclohexene-1-carboxylate synthase (545 aa).

Residues 170 to 185 (QVSGLQRSAPAPSSDS) are compositionally biased toward polar residues. A disordered region spans residues 170–193 (QVSGLQRSAPAPSSDSPLGAAPQL).

It belongs to the TPP enzyme family. MenD subfamily. As to quaternary structure, homodimer. Mg(2+) serves as cofactor. Requires Mn(2+) as cofactor. Thiamine diphosphate is required as a cofactor.

It carries out the reaction isochorismate + 2-oxoglutarate + H(+) = 5-enolpyruvoyl-6-hydroxy-2-succinyl-cyclohex-3-ene-1-carboxylate + CO2. It functions in the pathway quinol/quinone metabolism; 1,4-dihydroxy-2-naphthoate biosynthesis; 1,4-dihydroxy-2-naphthoate from chorismate: step 2/7. The protein operates within cofactor biosynthesis; phylloquinone biosynthesis. In terms of biological role, catalyzes the thiamine diphosphate-dependent decarboxylation of 2-oxoglutarate and the subsequent addition of the resulting succinic semialdehyde-thiamine pyrophosphate anion to isochorismate to yield 2-succinyl-5-enolpyruvyl-6-hydroxy-3-cyclohexene-1-carboxylate (SEPHCHC). This chain is 2-succinyl-5-enolpyruvyl-6-hydroxy-3-cyclohexene-1-carboxylate synthase, found in Parasynechococcus marenigrum (strain WH8102).